Reading from the N-terminus, the 354-residue chain is Glycerol-3-phosphate dehydrogenase [NAD(+)], glycosomal (354 aa).

NAD(+)-binding positions include 15–20 (GSGAFG), F90, K118, and A150. Position 118 (K118) interacts with substrate. Residue K203 is the Proton acceptor of the active site. NAD(+) contacts are provided by R267 and E293. 267–268 (RN) contacts substrate. Positions 352-354 (SKM) match the Microbody targeting signal motif.

It belongs to the NAD-dependent glycerol-3-phosphate dehydrogenase family.

The protein resides in the glycosome. It carries out the reaction sn-glycerol 3-phosphate + NAD(+) = dihydroxyacetone phosphate + NADH + H(+). This chain is Glycerol-3-phosphate dehydrogenase [NAD(+)], glycosomal (GPD), found in Trypanosoma brucei rhodesiense.